The sequence spans 396 residues: Seminal vesicle major clotting proteins (396 aa).

An N-terminal signal peptide occupies residues 1–21 (MKSTIFFILSLLLMLENQAAG). Positions 45–178 (MEEAVSGSGL…ASSVDHRKKG (134 aa)) are disordered. Basic and acidic residues predominate over residues 60–152 (RGSDREESVG…RVSVRHERVE (93 aa)). 3 SVP-3/-4 repeat repeats span residues 65 to 88 (EESV…RSSV), 89 to 112 (EEPE…RHNV), and 113 to 136 (EEPE…RHSA). The SVP-3/-4 repeat; truncated repeat unit spans residues 137–157 (EEPEGERVSVRHERVEKTHKR). The propeptide occupies 177 to 192 (KGHIRFKRQDPIAALA). SVP-1 clotting repeat units follow at residues 194–217 (IEGQ…ERFS), 218–241 (VKGQ…ERFS), 242–265 (VTGQ…ERFS), 266–289 (MTGQ…ERFS), 290–313 (MTGQ…ERFS), 314–337 (VTGQ…ERFS), 338–361 (VTGQ…ERFS), and 362–385 (VSGQ…SGFS). A 9 X tandem repeats of SVP-1 like motif region spans residues 194–396 (IEGQDAVKDS…KGQGSLKGLI (203 aa)). Residues 377-396 (QESVQSGFSVKGQGSLKGLI) form a disordered region. An SVP-1 clotting 9; truncated repeat occupies 386–396 (VKGQGSLKGLI).

To the SVP-2 precursor, particularly in regions where protein processing must occur. In terms of processing, SVP-3 may be a post-translationally modified form of SVP-4. Post-translationally, covalent clotting of SVP-1 is catalyzed by a transglutaminase secreted by the anterior prostate through the formation of gamma-glutamyl-epsilon-lysine cross-links. The conserved 2 Lys and 1 Gln residues per functional unit seem to be the residues involved in the formation of those cross-links.

The protein resides in the secreted. Its function is as follows. SVP-1 serves as substrate in the formation of the copulatory plug. SVP-3 and SVP-4 may also contribute to the clot. This chain is Seminal vesicle major clotting proteins, found in Cavia porcellus (Guinea pig).